The sequence spans 295 residues: tRNA pseudouridine synthase A (295 aa).

Aspartate 67 functions as the Nucleophile in the catalytic mechanism. Tyrosine 125 is a binding site for substrate.

The protein belongs to the tRNA pseudouridine synthase TruA family. Homodimer.

The enzyme catalyses uridine(38/39/40) in tRNA = pseudouridine(38/39/40) in tRNA. Functionally, formation of pseudouridine at positions 38, 39 and 40 in the anticodon stem and loop of transfer RNAs. This chain is tRNA pseudouridine synthase A, found in Prochlorococcus marinus (strain MIT 9303).